Consider the following 181-residue polypeptide: Acireductone dioxygenase (181 aa).

Residues His-97, His-99, Glu-103, and His-141 each contribute to the Fe(2+) site. The Ni(2+) site is built by His-97, His-99, Glu-103, and His-141.

It belongs to the acireductone dioxygenase (ARD) family. Monomer. Fe(2+) is required as a cofactor. The cofactor is Ni(2+).

The enzyme catalyses 1,2-dihydroxy-5-(methylsulfanyl)pent-1-en-3-one + O2 = 3-(methylsulfanyl)propanoate + CO + formate + 2 H(+). It catalyses the reaction 1,2-dihydroxy-5-(methylsulfanyl)pent-1-en-3-one + O2 = 4-methylsulfanyl-2-oxobutanoate + formate + 2 H(+). The protein operates within amino-acid biosynthesis; L-methionine biosynthesis via salvage pathway; L-methionine from S-methyl-5-thio-alpha-D-ribose 1-phosphate: step 5/6. Functionally, catalyzes 2 different reactions between oxygen and the acireductone 1,2-dihydroxy-3-keto-5-methylthiopentene (DHK-MTPene) depending upon the metal bound in the active site. Fe-containing acireductone dioxygenase (Fe-ARD) produces formate and 2-keto-4-methylthiobutyrate (KMTB), the alpha-ketoacid precursor of methionine in the methionine recycle pathway. Ni-containing acireductone dioxygenase (Ni-ARD) produces methylthiopropionate, carbon monoxide and formate, and does not lie on the methionine recycle pathway. The sequence is that of Acireductone dioxygenase from Pseudomonas aeruginosa (strain UCBPP-PA14).